The chain runs to 94 residues: UPF0358 protein Bcer98_2651 (94 aa).

The protein belongs to the UPF0358 family.

This is UPF0358 protein Bcer98_2651 from Bacillus cytotoxicus (strain DSM 22905 / CIP 110041 / 391-98 / NVH 391-98).